Here is a 318-residue protein sequence, read N- to C-terminus: CMRF35-like molecule 8 (318 aa).

Positions methionine 1–proline 27 are cleaved as a signal peptide. Positions leucine 28–tyrosine 129 constitute an Ig-like V-type domain. Residues leucine 28 to proline 185 lie on the Extracellular side of the membrane. Cysteine 46 and cysteine 113 are oxidised to a cystine. N-linked (GlcNAc...) asparagine glycosylation occurs at asparagine 93. Low complexity predominate over residues serine 139 to proline 148. The interval serine 139–arginine 174 is disordered. Residues alanine 186–tryptophan 206 traverse the membrane as a helical segment. At arginine 207–leucine 318 the chain is on the cytoplasmic side. A compositionally biased stretch (polar residues) spans glutamine 284–proline 296. Residues glutamine 284–leucine 318 form a disordered region. The segment covering glutamine 297–lysine 308 has biased composition (basic and acidic residues). Tyrosine 303 is modified (phosphotyrosine).

The protein belongs to the CD300 family. In terms of assembly, upon tyrosine-phosphorylation, interacts with PTN6/SHP-1 and PTPN11/SHP-2 and INPP5D. Post-translationally, phosphorylated on tyrosine. In terms of processing, N-glycosylated. As to expression, present on the surface of the majority of myeloid cells and a subset of B-cells. Present on the surface of NK cells after IL-12 stimulation.

It localises to the cell membrane. Functionally, inhibitory receptor which may contribute to the down-regulation of cytolytic activity in natural killer (NK) cells, and to the down-regulation of mast cell degranulation. Negatively regulates the Toll-like receptor (TLR) signaling mediated by MYD88 but not TRIF through activation of PTPN6. This is CMRF35-like molecule 8 (Cd300a) from Mus musculus (Mouse).